We begin with the raw amino-acid sequence, 400 residues long: uncharacterized protein (400 aa).

Positions 1-31 (MENPIKPVATRSIGIAVVLLVVGIVIGFAVG) are cleaved as a signal peptide.

The protein belongs to the bacterial solute-binding protein 1 family. WtpA subfamily.

This is an uncharacterized protein from Thermoplasma acidophilum (strain ATCC 25905 / DSM 1728 / JCM 9062 / NBRC 15155 / AMRC-C165).